We begin with the raw amino-acid sequence, 294 residues long: Probable 3-hydroxyisobutyrate dehydrogenase (294 aa).

NAD(+)-binding positions include 3–31 (TIAF…RGFD) and T93. Residue K168 is part of the active site. Position 243 (K243) interacts with NAD(+).

It belongs to the HIBADH-related family.

It catalyses the reaction 3-hydroxy-2-methylpropanoate + NAD(+) = 2-methyl-3-oxopropanoate + NADH + H(+). It functions in the pathway amino-acid degradation; L-valine degradation. In Mycobacterium bovis (strain ATCC BAA-935 / AF2122/97), this protein is Probable 3-hydroxyisobutyrate dehydrogenase (mmsB).